A 432-amino-acid chain; its full sequence is Adenosylhomocysteinase (432 aa).

Residue S2 is modified to N-acetylserine. Substrate-binding residues include T57, D131, and E156. S183 bears the Phosphoserine mark. The tract at residues 183–350 (SVTKSKFDNL…EGRLVNLGCA (168 aa)) is NAD binding. The substrate site is built by K186 and D190. K186 is modified (N6-(2-hydroxyisobutyryl)lysine). A Phosphotyrosine modification is found at Y193.

Belongs to the adenosylhomocysteinase family. As to quaternary structure, homotetramer. Interaction with AHCYL1. NAD(+) is required as a cofactor.

It localises to the cytoplasm. The protein resides in the melanosome. It is found in the nucleus. Its subcellular location is the endoplasmic reticulum. The enzyme catalyses S-adenosyl-L-homocysteine + H2O = L-homocysteine + adenosine. It functions in the pathway amino-acid biosynthesis; L-homocysteine biosynthesis; L-homocysteine from S-adenosyl-L-homocysteine: step 1/1. Functionally, catalyzes the hydrolysis of S-adenosyl-L-homocysteine to form adenosine and homocysteine. Binds copper ions. The sequence is that of Adenosylhomocysteinase (AHCY) from Macaca fascicularis (Crab-eating macaque).